A 390-amino-acid polypeptide reads, in one-letter code: uncharacterized protein (390 aa).

This is an uncharacterized protein from Archaeoglobus fulgidus (strain ATCC 49558 / DSM 4304 / JCM 9628 / NBRC 100126 / VC-16).